We begin with the raw amino-acid sequence, 207 residues long: Metalloproteinase inhibitor 1 (207 aa).

Positions 1–23 (MAPLAALASSMLLLLWLVAPSRA) are cleaved as a signal peptide. Cys-24 serves as a coordination point for Zn(2+). An involved in metalloproteinase-binding region spans residues 24–27 (CTCV). 6 disulfide bridges follow: Cys-24–Cys-93, Cys-26–Cys-122, Cys-36–Cys-147, Cys-150–Cys-197, Cys-155–Cys-160, and Cys-168–Cys-189. In terms of domain architecture, NTR spans 24 to 147 (CTCVPPHPQT…GFTKTYAAGC (124 aa)). N-linked (GlcNAc...) asparagine glycosylation is present at Asn-53. The involved in metalloproteinase-binding stretch occupies residues 90 to 91 (ES). The N-linked (GlcNAc...) asparagine glycan is linked to Asn-101. Position 178 is a phosphoserine (Ser-178).

The protein belongs to the protease inhibitor I35 (TIMP) family. In terms of assembly, interacts with MMP1, MMP3, MMP10 and MMP13, but has only very low affinity for MMP14. Interacts with CD63; identified in a complex with CD63 and ITGB1. The activity of TIMP1 is dependent on the presence of disulfide bonds. In terms of processing, N-glycosylated.

The protein resides in the secreted. Its function is as follows. Metalloproteinase inhibitor that functions by forming one to one complexes with target metalloproteinases, such as collagenases, and irreversibly inactivates them by binding to their catalytic zinc cofactor. Acts on MMP1, MMP2, MMP3, MMP7, MMP8, MMP9, MMP10, MMP11, MMP12, MMP13 and MMP16. Does not act on MMP14. Also functions as a growth factor that regulates cell differentiation, migration and cell death and activates cellular signaling cascades via CD63 and ITGB1. Plays a role in integrin signaling. This Oryctolagus cuniculus (Rabbit) protein is Metalloproteinase inhibitor 1 (TIMP1).